The chain runs to 1933 residues: Protein TIC 214 (1933 aa).

A run of 6 helical transmembrane segments spans residues 18 to 38 (IVNS…FSIG), 60 to 80 (ATTG…YAPL), 87 to 107 (PHTI…FYTD), 128 to 148 (FSIQ…HFIL), 176 to 196 (VGWL…LVWI), and 230 to 250 (IFYI…PAPL). Disordered stretches follow at residues 266 to 291 (AKGK…VGVG), 473 to 514 (KTKS…SRDN), 808 to 832 (THRE…AEDP), and 1066 to 1121 (ESFT…SSNA). The segment covering 278 to 289 (EEGDVEKEDEVG) has biased composition (acidic residues). A compositionally biased stretch (polar residues) spans 476–487 (SLSPEKTSGDNL). 2 stretches are compositionally biased toward basic and acidic residues: residues 488–514 (ETSR…SRDN) and 819–832 (DEKN…AEDP). Positions 1066-1078 (ESFTQISSPSSTN) are enriched in polar residues. The span at 1105–1115 (KEKKKKKRSLK) shows a compositional bias: basic residues. A helical transmembrane segment spans residues 1135–1155 (LPVYLKLFIQRIYTGIFFSII). Residues 1562-1642 (NADNEKNEKK…SAESTTKKVT (81 aa)) are disordered. Positions 1564–1642 (DNEKNEKKEA…SAESTTKKVT (79 aa)) are enriched in basic and acidic residues.

It belongs to the TIC214 family. In terms of assembly, part of the Tic complex.

The protein resides in the plastid. Its subcellular location is the chloroplast inner membrane. Its function is as follows. Involved in protein precursor import into chloroplasts. May be part of an intermediate translocation complex acting as a protein-conducting channel at the inner envelope. This is Protein TIC 214 from Jasminum nudiflorum (Winter jasmine).